Here is a 461-residue protein sequence, read N- to C-terminus: Photosystem II CP43 reaction center protein (461 aa).

A propeptide spanning residues 1 to 2 is cleaved from the precursor; sequence ME. Thr-3 carries the N-acetylthreonine modification. Position 3 is a phosphothreonine (Thr-3). The next 5 membrane-spanning stretches (helical) occupy residues 57-81, 122-143, 166-188, 243-263, and 279-300; these read LFEV…PHIA, LIGP…KDKN, KAMY…RIIT, TPWP…LSYS, and WFNN…ASQA. Residue Glu-355 participates in [CaMn4O5] cluster binding. The helical transmembrane segment at 435–459 threads the bilayer; sequence RARAAAAGFEKGIDRVDEPVLSMRP.

The protein belongs to the PsbB/PsbC family. PsbC subfamily. PSII is composed of 1 copy each of membrane proteins PsbA, PsbB, PsbC, PsbD, PsbE, PsbF, PsbH, PsbI, PsbJ, PsbK, PsbL, PsbM, PsbT, PsbX, PsbY, PsbZ, Psb30/Ycf12, at least 3 peripheral proteins of the oxygen-evolving complex and a large number of cofactors. It forms dimeric complexes. It depends on Binds multiple chlorophylls and provides some of the ligands for the Ca-4Mn-5O cluster of the oxygen-evolving complex. It may also provide a ligand for a Cl- that is required for oxygen evolution. PSII binds additional chlorophylls, carotenoids and specific lipids. as a cofactor.

It is found in the plastid. It localises to the chloroplast thylakoid membrane. In terms of biological role, one of the components of the core complex of photosystem II (PSII). It binds chlorophyll and helps catalyze the primary light-induced photochemical processes of PSII. PSII is a light-driven water:plastoquinone oxidoreductase, using light energy to abstract electrons from H(2)O, generating O(2) and a proton gradient subsequently used for ATP formation. The polypeptide is Photosystem II CP43 reaction center protein (Chlamydomonas moewusii (Chlamydomonas eugametos)).